The following is a 686-amino-acid chain: Acyl-CoA synthetase short-chain family member 3, mitochondrial (686 aa).

The N-terminal 29 residues, 1-29 (MKPSWLQCRKVTSAGGLGGPLPGSSPARG), are a transit peptide targeting the mitochondrion. 227 to 230 (EPGR) is a CoA binding site. ATP contacts are provided by residues 425–427 (GER) and 446–451 (DHWWQT). N6-succinyllysine is present on K518. Residue K524 is modified to N6-acetyllysine. D539, R554, and R565 together coordinate ATP. R624 contributes to the CoA binding site.

It belongs to the ATP-dependent AMP-binding enzyme family.

The protein resides in the mitochondrion matrix. The catalysed reaction is acetate + ATP + CoA = acetyl-CoA + AMP + diphosphate. The enzyme catalyses propanoate + ATP + CoA = propanoyl-CoA + AMP + diphosphate. It carries out the reaction butanoate + ATP + CoA = butanoyl-CoA + AMP + diphosphate. Its function is as follows. Catalyzes the synthesis of acetyl-CoA from short-chain fatty acids. Propionate is the preferred substrate. Can utilize acetate and butyrate with a much lower affinity. The sequence is that of Acyl-CoA synthetase short-chain family member 3, mitochondrial (ACSS3) from Homo sapiens (Human).